Consider the following 558-residue polypeptide: Dihydroxy-acid dehydratase (558 aa).

Position 81 (D81) interacts with Mg(2+). C122 lines the [2Fe-2S] cluster pocket. Positions 123 and 124 each coordinate Mg(2+). Residue K124 is modified to N6-carboxylysine. [2Fe-2S] cluster is bound at residue C195. E447 is a Mg(2+) binding site. The active-site Proton acceptor is the S473.

This sequence belongs to the IlvD/Edd family. In terms of assembly, homodimer. It depends on [2Fe-2S] cluster as a cofactor. Mg(2+) is required as a cofactor.

The enzyme catalyses (2R)-2,3-dihydroxy-3-methylbutanoate = 3-methyl-2-oxobutanoate + H2O. It catalyses the reaction (2R,3R)-2,3-dihydroxy-3-methylpentanoate = (S)-3-methyl-2-oxopentanoate + H2O. It participates in amino-acid biosynthesis; L-isoleucine biosynthesis; L-isoleucine from 2-oxobutanoate: step 3/4. It functions in the pathway amino-acid biosynthesis; L-valine biosynthesis; L-valine from pyruvate: step 3/4. Functionally, functions in the biosynthesis of branched-chain amino acids. Catalyzes the dehydration of (2R,3R)-2,3-dihydroxy-3-methylpentanoate (2,3-dihydroxy-3-methylvalerate) into 2-oxo-3-methylpentanoate (2-oxo-3-methylvalerate) and of (2R)-2,3-dihydroxy-3-methylbutanoate (2,3-dihydroxyisovalerate) into 2-oxo-3-methylbutanoate (2-oxoisovalerate), the penultimate precursor to L-isoleucine and L-valine, respectively. This Bacillus subtilis (strain 168) protein is Dihydroxy-acid dehydratase.